A 509-amino-acid polypeptide reads, in one-letter code: 2,3-bisphosphoglycerate-independent phosphoglycerate mutase (509 aa).

Aspartate 11 is a binding site for Mn(2+). A Phosphotyrosine modification is found at tyrosine 35. Position 61 (serine 61) interacts with Mn(2+). Serine 61 serves as the catalytic Phosphoserine intermediate. Substrate contacts are provided by residues histidine 122, 152–153 (RD), arginine 184, arginine 190, 260–263 (RPDR), and lysine 335. Aspartate 402, histidine 406, aspartate 443, histidine 444, and histidine 461 together coordinate Mn(2+).

Belongs to the BPG-independent phosphoglycerate mutase family. In terms of assembly, monomer. Mn(2+) is required as a cofactor.

It carries out the reaction (2R)-2-phosphoglycerate = (2R)-3-phosphoglycerate. It functions in the pathway carbohydrate degradation; glycolysis; pyruvate from D-glyceraldehyde 3-phosphate: step 3/5. In terms of biological role, essential for rapid growth and for sporulation. Catalyzes the interconversion of 2-phosphoglycerate and 3-phosphoglycerate. The protein is 2,3-bisphosphoglycerate-independent phosphoglycerate mutase of Bacillus cereus (strain ATCC 10987 / NRS 248).